The chain runs to 901 residues: Protein translocase subunit SecA 1 (901 aa).

Residues Gln-89, 107–111 (GEGKT), and Asp-502 contribute to the ATP site. The disordered stretch occupies residues 856 to 875 (AEAKASGDARPGFVEDDPST). Zn(2+)-binding residues include Cys-885, Cys-887, Cys-896, and His-897.

The protein belongs to the SecA family. In terms of assembly, monomer and homodimer. Part of the essential Sec protein translocation apparatus which comprises SecA, SecYEG and auxiliary proteins SecDF-YajC and YidC. The cofactor is Zn(2+).

The protein resides in the cell inner membrane. The protein localises to the cytoplasm. The enzyme catalyses ATP + H2O + cellular proteinSide 1 = ADP + phosphate + cellular proteinSide 2.. Its function is as follows. Part of the Sec protein translocase complex. Interacts with the SecYEG preprotein conducting channel. Has a central role in coupling the hydrolysis of ATP to the transfer of proteins into and across the cell membrane, serving both as a receptor for the preprotein-SecB complex and as an ATP-driven molecular motor driving the stepwise translocation of polypeptide chains across the membrane. In Ruegeria pomeroyi (strain ATCC 700808 / DSM 15171 / DSS-3) (Silicibacter pomeroyi), this protein is Protein translocase subunit SecA 1.